The primary structure comprises 979 residues: Receptor-type tyrosine-protein phosphatase-like N (979 aa).

Residues 1–34 (MRRPRRPGGLGGSGGLRLLLCLLLLSSRPGGCSA) form the signal peptide. Positions 35-131 (VSAHGCLFDR…RPRDRSGLAP (97 aa)) are RESP18 homology domain. Over 35–575 (VSAHGCLFDR…QTAHSTSPMR (541 aa)) the chain is Lumenal. Cys53 and Cys62 are disulfide-bonded. 2 stretches are compositionally biased toward basic and acidic residues: residues 112–127 (RIPR…RDRS) and 304–323 (RAED…RGEK). Disordered regions lie at residues 112–173 (RIPR…SSSL), 289–329 (SRAR…SPAV), and 393–439 (VEGR…ARPP). A Phosphoserine modification is found at Ser308. A compositionally biased stretch (low complexity) spans 415–433 (SPTSSEVQQVPSPVSSEPP). Thr441 carries an O-linked (GalNAc...) threonine glycan. A sufficient for dimerization of proICA512 region spans residues 449-575 (SPLGQSQPTV…QTAHSTSPMR (127 aa)). Asn506 and Asn524 each carry an N-linked (GlcNAc...) asparagine glycan. A helical transmembrane segment spans residues 576–600 (SVLLTLVALAGVAGLLVALAVALCV). The interval 601–732 (RQHARQQDKE…PNTCATAQGE (132 aa)) is sufficient for dimerization of proICA512. The Cytoplasmic portion of the chain corresponds to 601 to 979 (RQHARQQDKE…VNAILKALPQ (379 aa)). The tract at residues 643 to 680 (NRAEGPPEPSRVSSVSSQFSDAAQASPSSHSSTPSWCE) is disordered. Low complexity predominate over residues 652 to 677 (SRVSSVSSQFSDAAQASPSSHSSTPS). Residues 709–969 (LAKEWQALCA…EFALTAVAEE (261 aa)) enclose the Tyrosine-protein phosphatase domain. Lys754 is covalently cross-linked (Glycyl lysine isopeptide (Lys-Gly) (interchain with G-Cter in SUMO)).

Belongs to the protein-tyrosine phosphatase family. Receptor class 8 subfamily. As to quaternary structure, homodimer; shown for the unprocessed protein (proICA512) in the endoplasmic reticulum and resolved during protein maturation as ICA512-TMF seems to be predominantly monomeric in secretory granules; however, ICA512-CCF interacts with ICA512-TMF disrupting the ICA512-TMF:SNTB2 complex. The isolated lumenal RESP18 homology domain has been shown to form disulfide-linked homooligomers. Interacts (via cytoplasmic domain) with phosphorylated SNTB2; this protects PTPRN against cleavage by CAPN1 to produce ICA512-CCF. Dephosphorylation of SNTB2 upon insulin stimulation disrupts the interaction and results in PTPRN cleavage. Interacts with SNX19. ICA512-CCF interacts with PIAS4; in the nucleus. Interacts with STAT5B (phosphorylated); down-regulated by ICA512-CCF sumoylation; ICA512-CCF prevents STAT5B dephosphorylation; ICA512-CCF mediates interaction of STAT5B with PIAS4. Interacts (via RESP18 homology domain) with insulin and proinsulin. Interacts with PTPRN2, PTPRA and PTPRE. Post-translationally, N-glycosylated. O-glycosylated with core 1 or possibly core 8 glycans. In terms of processing, subject to proteolytic cleavage at multiple sites. Subject to cleavage on a pair of basic residues. On exocytosis of secretory granules in pancreatic beta-cells ICA512-TMF is transiently inserted in the plasma-membrane and cleaved by mu-type calpain CPN1 to yield ICA512-CCF. Post-translationally, sumoylated at two sites including Lys-754. Sumoylation decreases interaction with STAT5. In terms of tissue distribution, expression is restricted to neuroendocrine cells. Found in pancreas, brain and pituitary.

The protein resides in the membrane. The protein localises to the cytoplasmic vesicle. It localises to the secretory vesicle membrane. It is found in the perikaryon. Its subcellular location is the cell projection. The protein resides in the axon. The protein localises to the synapse. It localises to the cell membrane. It is found in the endosome. Its subcellular location is the nucleus. In terms of biological role, plays a role in vesicle-mediated secretory processes. Required for normal accumulation of secretory vesicles in hippocampus, pituitary and pancreatic islets. Required for the accumulation of normal levels of insulin-containing vesicles and preventing their degradation. Plays a role in insulin secretion in response to glucose stimuli. Required for normal accumulation of the neurotransmitters norepinephrine, dopamine and serotonin in the brain. In females, but not in males, required for normal accumulation and secretion of pituitary hormones, such as luteinizing hormone (LH) and follicle-stimulating hormone (FSH). Required to maintain normal levels of renin expression and renin release. Seems to lack intrinsic enzyme activity. May regulate catalytic active protein-tyrosine phosphatases such as PTPRA through dimerization. Its function is as follows. ICA512-TMF regulates dynamics and exocytosis of insulin secretory granules (SGs); binding of ICA512-TMF to SNTB2/beta-2-syntrophin is proposed to restrain SGs mobility and exocytosis by tethering them to the actin cytoskeleton depending on UTRN; the function is inhibited by cytoplasmic ICA512-CFF dimerizing with ICA512-TMF and displacing SNTB2. ICA512-CCF translocated to the nucleus promotes expression of insulin and other granule-related genes; the function implicates binding to and regulating activity of STAT5B probably by preventing its dephosphorylation and potentially by inducing its sumoylation by recruiting PIAS4. Enhances pancreatic beta-cell proliferation by converging with signaling by STAT5B and STAT3. ICA512-CCF located in the cytoplasm regulates dynamics and exocytosis of insulin secretory granules (SGs) by dimerizing with ICA512-TMF and displacing SNTB2 thus enhancing SGs mobility and exocytosis. The protein is Receptor-type tyrosine-protein phosphatase-like N (PTPRN) of Homo sapiens (Human).